The chain runs to 274 residues: Thiamine kinase (274 aa).

The protein belongs to the thiamine kinase family.

The catalysed reaction is thiamine + ATP = thiamine phosphate + ADP + H(+). It participates in cofactor biosynthesis; thiamine diphosphate biosynthesis; thiamine phosphate from thiamine: step 1/1. Functionally, catalyzes the ATP-dependent phosphorylation of thiamine to thiamine phosphate. Is involved in thiamine salvage. The sequence is that of Thiamine kinase from Shigella flexneri serotype 5b (strain 8401).